We begin with the raw amino-acid sequence, 83 residues long: Translation initiation factor IF-1 (83 aa).

Residues 1 to 72 (MAKEELIEMQ…SKGRITFRHL (72 aa)) form the S1-like domain.

Belongs to the IF-1 family. Component of the 30S ribosomal translation pre-initiation complex which assembles on the 30S ribosome in the order IF-2 and IF-3, IF-1 and N-formylmethionyl-tRNA(fMet); mRNA recruitment can occur at any time during PIC assembly.

It localises to the cytoplasm. Its function is as follows. One of the essential components for the initiation of protein synthesis. Stabilizes the binding of IF-2 and IF-3 on the 30S subunit to which N-formylmethionyl-tRNA(fMet) subsequently binds. Helps modulate mRNA selection, yielding the 30S pre-initiation complex (PIC). Upon addition of the 50S ribosomal subunit IF-1, IF-2 and IF-3 are released leaving the mature 70S translation initiation complex. This Verminephrobacter eiseniae (strain EF01-2) protein is Translation initiation factor IF-1.